A 769-amino-acid polypeptide reads, in one-letter code: Disintegrin and metalloproteinase domain-containing protein 11 (769 aa).

An N-terminal signal peptide occupies residues methionine 1–glycine 23. The propeptide occupies threonine 24–arginine 225. Positions glycine 40 to glycine 78 are disordered. Positions glutamate 61–glutamine 73 are enriched in basic and acidic residues. 2 N-linked (GlcNAc...) asparagine glycosylation sites follow: asparagine 96 and asparagine 163. At glutamine 226 to asparagine 734 the chain is on the extracellular side. The region spanning lysine 239–proline 438 is the Peptidase M12B domain. The segment at glycine 332–alanine 769 is required for localization to cerebellar cortex basket cell terminals. Also required for localization of KCNA1, KCNA2, DLG4 and ADAM22 to cerebellar cortex basket cell terminal perisomatic axons and pinceaux. 4 disulfides stabilise this stretch: cysteine 349–cysteine 433, cysteine 392–cysteine 417, cysteine 394–cysteine 401, and cysteine 503–cysteine 523. A Disintegrin domain is found at proline 444 to aspartate 531. N-linked (GlcNAc...) asparagine glycosylation is found at asparagine 605 and asparagine 673. Intrachain disulfides connect cysteine 677–cysteine 692, cysteine 686–cysteine 698, and cysteine 700–cysteine 709. The 33-residue stretch at cysteine 677–cysteine 709 folds into the EGF-like domain. Residues isoleucine 735–glycine 755 form a helical membrane-spanning segment. At tryptophan 756 to alanine 769 the chain is on the cytoplasmic side.

Interacts with LGI1 and LGI4. Interacts with KCNA1/KV1.1, KCNA2/KV1.2, DLG4/PSD-95 and ADAM22. The precursor is cleaved by a furin endopeptidase. As to expression, expressed predominantly in brain. Slightly detected or not at all in other tissues.

It localises to the presynaptic cell membrane. Its subcellular location is the perikaryon. The protein resides in the cell projection. The protein localises to the axon. In terms of biological role, probable ligand for integrin in the brain. This is a non catalytic metalloprotease-like protein. Required for localization of the potassium channel subunit proteins KCNA1/KV1.1 and KCNA2/KV1.2 at cerebellar cortex basket cell distal terminals, is thereby involved in ephaptic inhibitory synchronization of Purkinje cell firing and response to stress. Plays a role in spatial learning and motor coordination. Involved in the nociceptive pain response to chemical-derived stimulation. The chain is Disintegrin and metalloproteinase domain-containing protein 11 (ADAM11) from Homo sapiens (Human).